The chain runs to 500 residues: NAD(P)H-quinone oxidoreductase chain 4, chloroplastic (500 aa).

14 helical membrane passes run phenylalanine 3 to phenylalanine 23, isoleucine 37 to leucine 57, isoleucine 87 to isoleucine 107, leucine 113 to serine 130, leucine 134 to methionine 154, phenylalanine 167 to leucine 187, alanine 208 to isoleucine 228, histidine 242 to valine 262, alanine 272 to alanine 292, isoleucine 305 to aspartate 325, glycine 330 to glycine 350, leucine 386 to threonine 406, isoleucine 416 to methionine 436, and leucine 462 to valine 482.

Belongs to the complex I subunit 4 family.

It is found in the plastid. The protein resides in the chloroplast thylakoid membrane. The catalysed reaction is a plastoquinone + NADH + (n+1) H(+)(in) = a plastoquinol + NAD(+) + n H(+)(out). The enzyme catalyses a plastoquinone + NADPH + (n+1) H(+)(in) = a plastoquinol + NADP(+) + n H(+)(out). The polypeptide is NAD(P)H-quinone oxidoreductase chain 4, chloroplastic (Platanus occidentalis (Sycamore)).